Consider the following 458-residue polypeptide: Probable M18 family aminopeptidase 1 (458 aa).

Zn(2+) contacts are provided by His-95, His-170, and His-434.

Belongs to the peptidase M18 family. Requires Zn(2+) as cofactor.

The chain is Probable M18 family aminopeptidase 1 from Borreliella afzelii (strain PKo) (Borrelia afzelii).